The primary structure comprises 1407 residues: MKDLLNLLKSQGQVEEFDSIRISLASPEMIRSWSFGEVKKPETINYRTFKPEREGLFCAKIFGPVKDYECLCGKYKRMKHRGIICEKCGVEVTLAKVRRERMGHIELASPVAHIWFLKSLPSRIGLLLDMTLRDIERVLYFESYVVTEPGMTTLERGQLLTDEQYFEAMEEFGDEFEAQMGAEAIQTLMRAIDLETEVQRLREEIPNTSSETKIKKYSKRLKLLEAFHFSGNKPEWMVMEVLPVLPPDLRPLVPLDGGRFATSDLNDLYRRVINRNNRLKRLLDLNAPDIIVRNEKRMLQEAVDALLDNGRRGRAITGSNKRPLKSLADMIKGKQGRFRQNLLGKRVDYSGRSVIVVGPTLRLHQCGLPKKMALELFKPFIFSKLELRGLATTIKAAKKMVEREEAVVWDILDEVIREHPVLLNRAPTLHRLGIQAFEPVLIEGKAIQLHPLVCSAYNADFDGDQMAVHVPLTIEAQLEARALMMSTNNILSPASGEPIIVPSQDVVLGLYWMTRERINAKGEGMVFADTMEVSRAYYSKQVDLQARIKVRLTETLIGAEGERTSETKLVQTTVGRVLLWEIVPAGIPLEMINRPMVKKAISAVINYCYRVVGLKATVIFADRLMYMGYDFSTKSGSSIGVNDFTIPAAKADIIARADAEVKEIETQYASGLVTQGEKYNKVIDIWSRANDLVAKSMMEGISKETVINRDGVEEQQSSFNSVFMYADSGARGSPAQIRQLAGMRGLMARPDGSIIETPIKANFREGLNVLQYFISTHGARKGLADTALKTANSGYLTRRLVDVAQDLVVTLQDCGTDSGLTMSPVIEGGDVIESLGDRILGRVVARDVIRPGSDEILVPAGTMIDEAWVGRIEEMGIDEVLVRSPITCESRNGICSMCYGRDLARGHRVNPGEAVGVIAAQSIGEPGTQLTMRTFHIGGAASRASAADSVQVKQEGTVRLLNVKVVSNPAGNLVAVSRSGELAIADASGRERERYKIPYGALITVKDGETVKGGQIVAKWDPHTHPIVSEVAGTVAFSGMEEGLSIRRQTDELTGLSSIEILDPAERPSAGKDLRPAITLVDAKGKELFLANTNVPAHYMLPAKAILTINNGDIINVGDIVARIPQEGSKTRDITGGLPRVADLFEARRPKEPAILAEISGTVSFGKETKGKRRLIITPTDGQVLDDGSTHYEVLIPKHRQLTVFEGEMVAKGEVVSDGPANPHDILRLQGVEALARYITNEIQDVYRLQGVKINDKHIETIVRQMLRKVEITTMGDSSFVKGEQVELTSVLEENEKLRAEGKQPAHYERLLLGITKASLATESFISAASFQETTRVLTEAAVTGKKDNLRGLKENVVVGRLIPAGTGLAYHNDRKRRREEALSEQVGVSAEDVEAALTEALKSSVS.

Zn(2+) is bound by residues Cys-70, Cys-72, Cys-85, and Cys-88. Mg(2+) is bound by residues Asp-460, Asp-462, and Asp-464. Residues Cys-814, Cys-888, Cys-895, and Cys-898 each contribute to the Zn(2+) site.

Belongs to the RNA polymerase beta' chain family. In terms of assembly, the RNAP catalytic core consists of 2 alpha, 1 beta, 1 beta' and 1 omega subunit. When a sigma factor is associated with the core the holoenzyme is formed, which can initiate transcription. Requires Mg(2+) as cofactor. It depends on Zn(2+) as a cofactor.

The enzyme catalyses RNA(n) + a ribonucleoside 5'-triphosphate = RNA(n+1) + diphosphate. Its function is as follows. DNA-dependent RNA polymerase catalyzes the transcription of DNA into RNA using the four ribonucleoside triphosphates as substrates. This Cellvibrio japonicus (strain Ueda107) (Pseudomonas fluorescens subsp. cellulosa) protein is DNA-directed RNA polymerase subunit beta'.